Reading from the N-terminus, the 393-residue chain is NAD(P)H-quinone oxidoreductase subunit H, chloroplastic (393 aa).

Belongs to the complex I 49 kDa subunit family. As to quaternary structure, NDH is composed of at least 16 different subunits, 5 of which are encoded in the nucleus.

Its subcellular location is the plastid. It is found in the chloroplast thylakoid membrane. It carries out the reaction a plastoquinone + NADH + (n+1) H(+)(in) = a plastoquinol + NAD(+) + n H(+)(out). The catalysed reaction is a plastoquinone + NADPH + (n+1) H(+)(in) = a plastoquinol + NADP(+) + n H(+)(out). NDH shuttles electrons from NAD(P)H:plastoquinone, via FMN and iron-sulfur (Fe-S) centers, to quinones in the photosynthetic chain and possibly in a chloroplast respiratory chain. The immediate electron acceptor for the enzyme in this species is believed to be plastoquinone. Couples the redox reaction to proton translocation, and thus conserves the redox energy in a proton gradient. The chain is NAD(P)H-quinone oxidoreductase subunit H, chloroplastic from Oenothera biennis (German evening primrose).